The primary structure comprises 141 residues: 16 kDa protein (141 aa).

Residues 97-119 are disordered; it reads ASATVKKSHKSKPSKKKFKERKD. The segment covering 102–115 has biased composition (basic residues); the sequence is KKSHKSKPSKKKFK.

The chain is 16 kDa protein from Beta vulgaris (Sugar beet).